The following is a 524-amino-acid chain: Protopine 6-monooxygenase (524 aa).

The next 3 helical transmembrane spans lie at 4–24 (LMLA…VFLY), 232–252 (LASL…DIFQ), and 319–339 (MIMG…SLLM). Residue cysteine 462 coordinates heme.

The protein belongs to the cytochrome P450 family. Requires heme as cofactor.

Its subcellular location is the endoplasmic reticulum membrane. It catalyses the reaction protopine + reduced [NADPH--hemoprotein reductase] + O2 = 6-hydroxyprotopine + oxidized [NADPH--hemoprotein reductase] + H2O + H(+). It participates in alkaloid biosynthesis. Catalyzes the conversion of protopine and allocryptopine to dihydrosanguinarine and dihydrochelerythrine, respectively, in the biosynthesis of isoquinoline alkaloid sanguinarine. The protein is Protopine 6-monooxygenase (CYP82N2v2) of Eschscholzia californica (California poppy).